A 742-amino-acid chain; its full sequence is Protein-lysine N-methyltransferase SMYD4 (742 aa).

110-112 (RSA) provides a ligand contact to S-adenosyl-L-methionine. The SET domain maps to 230-569 (SSLSLNFSTE…SGQEIFHCYG (340 aa)). Zn(2+)-binding residues include cysteine 295, cysteine 298, cysteine 308, cysteine 311, cysteine 317, cysteine 321, histidine 330, and cysteine 334. The segment at 295–334 (CHHCLKQLLASIPCCGCSYAKYCSQNCADVAWEQYHRTEC) adopts an MYND-type zinc-finger fold. S-adenosyl-L-methionine contacts are provided by residues asparagine 418, 534–535 (NH), and tyrosine 568.

It belongs to the class V-like SAM-binding methyltransferase superfamily.

It is found in the nucleus. Its subcellular location is the cytoplasm. The catalysed reaction is L-lysyl-[protein] + S-adenosyl-L-methionine = N(6)-methyl-L-lysyl-[protein] + S-adenosyl-L-homocysteine + H(+). Its function is as follows. Protein-lysine N-methyltransferase. Monomethylates PRMT5, modulating its transcriptional activity. May also act as a histone methyltransferase. Plays a critical role in cardiac development. Acts as a key epigenetic regulator of gene expression during cardiac development via its dual activities as a methyltransferase and negative regulator of HDAC1. This Gallus gallus (Chicken) protein is Protein-lysine N-methyltransferase SMYD4 (SMYD4).